The following is a 617-amino-acid chain: Neopullulanase SusA (617 aa).

The N-terminal stretch at 1 to 22 (MKRNLLFIILLLLLPGLHQVFA) is a signal peptide. Ca(2+) contacts are provided by Asn-138, Asn-143, Asp-144, Gly-164, and Asp-166. Catalysis depends on residues Asp-331 and Glu-360.

This sequence belongs to the glycosyl hydrolase 13 family. Requires Ca(2+) as cofactor.

Its subcellular location is the periplasm. It carries out the reaction Hydrolysis of pullulan to panose (6-alpha-D-glucosylmaltose).. The protein operates within glycan degradation; starch degradation. Its function is as follows. Neopullulanase that cleaves 1,4-alpha-glucosidic linkages in starch to produce disaccharides or trisaccharides in starch degradation. The sequence is that of Neopullulanase SusA (susA) from Bacteroides thetaiotaomicron (strain ATCC 29148 / DSM 2079 / JCM 5827 / CCUG 10774 / NCTC 10582 / VPI-5482 / E50).